We begin with the raw amino-acid sequence, 122 residues long: Large ribosomal subunit protein uL14 (122 aa).

Belongs to the universal ribosomal protein uL14 family. As to quaternary structure, part of the 50S ribosomal subunit. Forms a cluster with proteins L3 and L19. In the 70S ribosome, L14 and L19 interact and together make contacts with the 16S rRNA in bridges B5 and B8.

Binds to 23S rRNA. Forms part of two intersubunit bridges in the 70S ribosome. The protein is Large ribosomal subunit protein uL14 of Desulfitobacterium hafniense (strain DSM 10664 / DCB-2).